The sequence spans 788 residues: Protein translocase subunit SecA (788 aa).

Residues Gln85, 103-107 (GEGKT), and Asp494 each bind ATP.

This sequence belongs to the SecA family. As to quaternary structure, monomer and homodimer. Part of the essential Sec protein translocation apparatus which comprises SecA, SecYEG and auxiliary proteins SecDF. Other proteins may also be involved.

The protein localises to the cell membrane. It is found in the cytoplasm. It carries out the reaction ATP + H2O + cellular proteinSide 1 = ADP + phosphate + cellular proteinSide 2.. Functionally, part of the Sec protein translocase complex. Interacts with the SecYEG preprotein conducting channel. Has a central role in coupling the hydrolysis of ATP to the transfer of proteins into and across the cell membrane, serving as an ATP-driven molecular motor driving the stepwise translocation of polypeptide chains across the membrane. The polypeptide is Protein translocase subunit SecA (Oenococcus oeni (strain ATCC BAA-331 / PSU-1)).